The sequence spans 246 residues: Triosephosphate isomerase (246 aa).

Residue 9 to 11 coordinates substrate; that stretch reads NWK. Catalysis depends on H95, which acts as the Electrophile. The active-site Proton acceptor is the E165. Substrate is bound by residues G171, S210, and 231 to 232; that span reads GG.

Belongs to the triosephosphate isomerase family. As to quaternary structure, homodimer.

It is found in the cytoplasm. The catalysed reaction is D-glyceraldehyde 3-phosphate = dihydroxyacetone phosphate. It functions in the pathway carbohydrate biosynthesis; gluconeogenesis. The protein operates within carbohydrate degradation; glycolysis; D-glyceraldehyde 3-phosphate from glycerone phosphate: step 1/1. Its function is as follows. Involved in the gluconeogenesis. Catalyzes stereospecifically the conversion of dihydroxyacetone phosphate (DHAP) to D-glyceraldehyde-3-phosphate (G3P). The chain is Triosephosphate isomerase from Thermodesulfovibrio yellowstonii (strain ATCC 51303 / DSM 11347 / YP87).